Reading from the N-terminus, the 488-residue chain is Teichuronic acid biosynthesis protein TuaE (488 aa).

Transmembrane regions (helical) follow at residues 7–29 (AVHTLALLAAAIFGVVLLLGAIH), 35–57 (MQMAAVLAVLAIGLFLLTLATAF), 64–86 (FMAVIYILIACTFLNNAFFAIHL), 91–110 (LFLYRLLLIAAGCLHIFGMV), 122–144 (LQVKGILLFFAFWFIYGLVSLLW), 154–173 (YLALLAMGIFFIYLIVMYVQ), 180–202 (IVYAIWLVMTVFLMIIGFYNHIT), 222–244 (PTSVFFNQNDFATFLSISFFFYI), 257–274 (AIGLVLSLCALYLIFATG), 279–298 (LLGIFAGIAVYIFIVLPPVL), 303–322 (IWLSAAGIALFAVLFASKIY), 354–376 (NAWHFFLDSYGFGVGAGNVSYYL), 397–419 (ILANFGLFIMLGYLSVYAYLIWV), and 459–476 (LFFHWVFMALVIAAVNVL).

Its subcellular location is the cell membrane. It participates in cell wall biogenesis; teichuronic acid biosynthesis. In terms of biological role, might be involved in the polymerization of teichuronic acid repeating units after their translocation to the outer surface of the membrane. The polypeptide is Teichuronic acid biosynthesis protein TuaE (tuaE) (Bacillus subtilis (strain 168)).